We begin with the raw amino-acid sequence, 230 residues long: Orotidine 5'-phosphate decarboxylase (230 aa).

Residues Asp10, Lys31, 58 to 67, Thr117, Arg179, Gln188, Gly208, and Arg209 contribute to the substrate site; that span reads DLKLHDIPNT. The Proton donor role is filled by Lys60. A disordered region spans residues 177-196; it reads GIRPKDASSDDQKRITTPED. Residues 179 to 196 show a composition bias toward basic and acidic residues; the sequence is RPKDASSDDQKRITTPED.

This sequence belongs to the OMP decarboxylase family. Type 1 subfamily. As to quaternary structure, homodimer.

The catalysed reaction is orotidine 5'-phosphate + H(+) = UMP + CO2. Its pathway is pyrimidine metabolism; UMP biosynthesis via de novo pathway; UMP from orotate: step 2/2. Functionally, catalyzes the decarboxylation of orotidine 5'-monophosphate (OMP) to uridine 5'-monophosphate (UMP). This Staphylococcus saprophyticus subsp. saprophyticus (strain ATCC 15305 / DSM 20229 / NCIMB 8711 / NCTC 7292 / S-41) protein is Orotidine 5'-phosphate decarboxylase.